An 833-amino-acid polypeptide reads, in one-letter code: MIPVTATLIRHRLRHLRHRIRFKSTSVSPFHLPLNHPTYLIWSANTSLGKTLVSTGIAASFLLQQPSSSATKLLYLKPIQTGFPSDSDSRFVFSKLDSLSLRRQIPISISNSVLHSSLPAAKSLGLNVEVSESGMCSLNFRDEKTVTGAPELLCKTLYAWEAAISPHLAAERENATVEDSVVLQMIEKCLKEEMECGVKSEKSDLLCLVETAGGVASPGPSGTLQCDLYRPFRLPGILVGDGRLGGISGTIAAYESLKLRGYDIAAVVFEDHGLVNEVPLTSYLRNKVPVLVLPPVPKDPSDDLIEWFVESDGVFKALKETMVLANLERLERLNGMAKLAGEVFWWPFTQHKLVHQETVTVIDSRCGENFSIYKASDNSSLSQQFDACASWWTQGPDPTFQAELAREMGYTAARFGHVMFPENVYEPALKCAELLLDGVGKGWASRVYFSDNGSTAIEIALKMAFRKFCVDHNFCEATEEEKHIVVKVIALRGSYHGDTLGAMEAQAPSPYTGFLQQPWYTGRGLFLDPPTVFLSNGSWNISLPESFSEIAPEYGTFTSRDEIFDKSRDASTLARIYSAYLSKHLQEHSGVRQSAHVGALIIEPVIHGAGGMHMVDPLFQRVLVNECRNRKIPVIFDEVFTGFWRLGVETTTELLGCKPDIACFAKLLTGGMVPLAVTLATDAVFDSFSGDSKLKALLHGHSYSAHAMGCATAAKAIQWFKDPETNHNITSQGKTLRELWDEELVQQISSHSAVQRVVVIGTLFALELKADASNSGYASLYAKSLLIMLREDGIFTRPLGNVIYLMCGPCTSPEICRRLLTKLYKRLGEFNRT.

A mitochondrion-targeting transit peptide spans 1–23; that stretch reads MIPVTATLIRHRLRHLRHRIRFK. The segment at 36–299 is dethiobiotin synthetase; the sequence is HPTYLIWSAN…VLVLPPVPKD (264 aa). 47–52 is a binding site for ATP; it reads SLGKTL. Thr51 contacts Mg(2+). Substrate is bound at residue Thr81. Asp88 contributes to the Mg(2+) binding site. ATP-binding positions include Asp97, 210–213, and 270–271; these read ETAG and ED. Glu210 serves as a coordination point for Mg(2+). The segment at 332–830 is 7,8-diamino-pelargonic acid aminotransferase; that stretch reads RLNGMAKLAG…TKLYKRLGEF (499 aa). 391–392 lines the (8S)-8-amino-7-oxononanoate pocket; that stretch reads WW. Residue 453–454 participates in pyridoxal 5'-phosphate binding; that stretch reads GS. (8S)-8-amino-7-oxononanoate is bound at residue Tyr495. ATP is bound by residues 518–520 and Glu545; that span reads PWY. Asp637 provides a ligand contact to pyridoxal 5'-phosphate. 2 residues coordinate (8S)-8-amino-7-oxononanoate: Lys666 and Gly700. N6-(pyridoxal phosphate)lysine is present on Lys666. Pyridoxal 5'-phosphate is bound at residue 701-702; the sequence is HS. Arg797 contacts (8S)-8-amino-7-oxononanoate.

It in the N-terminal section; belongs to the dethiobiotin synthetase family. The protein in the C-terminal section; belongs to the class-III pyridoxal-phosphate-dependent aminotransferase family. BioA subfamily. In terms of assembly, homodimer. Requires Mg(2+) as cofactor. Pyridoxal 5'-phosphate serves as cofactor.

It is found in the mitochondrion matrix. The enzyme catalyses (7R,8S)-7,8-diammoniononanoate + CO2 + ATP = (4R,5S)-dethiobiotin + ADP + phosphate + 3 H(+). It catalyses the reaction (8S)-8-amino-7-oxononanoate + S-adenosyl-L-methionine = S-adenosyl-4-methylsulfanyl-2-oxobutanoate + (7R,8S)-7,8-diammoniononanoate. It functions in the pathway cofactor biosynthesis; biotin biosynthesis; biotin from 7,8-diaminononanoate: step 1/2. The protein operates within cofactor biosynthesis; biotin biosynthesis; 7,8-diaminononanoate from 8-amino-7-oxononanoate (SAM route): step 1/1. Functionally, bifunctional enzyme that catalyzes two different reactions involved in the biotin biosynthesis. Its function is as follows. Catalyzes a mechanistically unusual reaction, the ATP-dependent insertion of CO2 between the N7 and N8 nitrogen atoms of 7,8-diaminopelargonic acid (DAPA) to form an ureido ring. Catalyzes the transfer of the alpha-amino group from S-adenosyl-L-methionine (SAM) to 7-keto-8-aminopelargonic acid (KAPA) to form 7,8-diaminopelargonic acid (DAPA). It is the only aminotransferase known to utilize SAM as an amino donor. The polypeptide is Bifunctional dethiobiotin synthetase/7,8-diamino-pelargonic acid aminotransferase, mitochondrial (Arabidopsis thaliana (Mouse-ear cress)).